The chain runs to 204 residues: Recombination protein RecR (204 aa).

The segment at 63–78 adopts a C4-type zinc-finger fold; sequence CNRCFNITVEDPCTIC. In terms of domain architecture, Toprim spans 86–181; the sequence is RQVCVVEEPL…RVTRLARGLP (96 aa).

The protein belongs to the RecR family.

Functionally, may play a role in DNA repair. It seems to be involved in an RecBC-independent recombinational process of DNA repair. It may act with RecF and RecO. The chain is Recombination protein RecR from Herpetosiphon aurantiacus (strain ATCC 23779 / DSM 785 / 114-95).